The chain runs to 89 residues: Small ribosomal subunit protein uS15 (89 aa).

The protein belongs to the universal ribosomal protein uS15 family. Part of the 30S ribosomal subunit. Forms a bridge to the 50S subunit in the 70S ribosome, contacting the 23S rRNA.

One of the primary rRNA binding proteins, it binds directly to 16S rRNA where it helps nucleate assembly of the platform of the 30S subunit by binding and bridging several RNA helices of the 16S rRNA. Functionally, forms an intersubunit bridge (bridge B4) with the 23S rRNA of the 50S subunit in the ribosome. In Mycolicibacterium smegmatis (strain ATCC 700084 / mc(2)155) (Mycobacterium smegmatis), this protein is Small ribosomal subunit protein uS15.